Reading from the N-terminus, the 291-residue chain is Potassium-transporting ATPase subunit beta (291 aa).

Residues 1-36 (MAALQEKKTCGQRMEEFQRYCWNPDTGQMLGRTLSR) are Cytoplasmic-facing. The chain crosses the membrane as a helical; Signal-anchor for type II membrane protein span at residues 37-57 (WVWISLYYVAFYVVMTGLFAL). Topologically, residues 58-291 (CLYVLMQTVD…KVEFKLKIEK (234 aa)) are extracellular. N-linked (GlcNAc...) asparagine glycans are attached at residues Asn-99, Asn-103, Asn-130, Asn-146, and Asn-161. Residues Cys-131 and Cys-152 are joined by a disulfide bond. Cys-162 and Cys-178 are disulfide-bonded. N-linked (GlcNAc...) asparagine glycosylation is found at Asn-193 and Asn-222. Residues 194 to 291 (GSAPRVDCAF…KVEFKLKIEK (98 aa)) form an immunoglobulin-like region. Cys-201 and Cys-263 are disulfide-bonded.

The protein belongs to the X(+)/potassium ATPases subunit beta family. In terms of assembly, the ATPase pump is composed of two subunits: alpha (catalytic) and beta (regulatory). Interacts with alpha subunit ATP12A; this interaction is required for the formation of a functionally active pump and targeting at the plasma membrane. Interacts (via N-terminus) with alpha subunit ATP4A (via the P-domain). Post-translationally, N-glycosylation is necessary for assembly and functional expression of the pump at the plasma membrane.

The protein resides in the apical cell membrane. The protein localises to the cell membrane. Functionally, the beta subunit of the gastric H(+)/K(+) ATPase pump which transports H(+) ions in exchange for K(+) ions across the apical membrane of parietal cells. Plays a structural and regulatory role in the assembly and membrane targeting of a functionally active pump. Within a transport cycle, the transfer of a H(+) ion across the membrane is coupled to ATP hydrolysis and is associated with a transient phosphorylation of the alpha subunit that shifts the pump conformation from inward-facing (E1) to outward-facing state (E2). Interacts with the phosphorylation domain of the alpha subunit and functions as a ratchet, stabilizing the lumenal-open E2 conformation and preventing the reverse reaction of the transport cycle. This chain is Potassium-transporting ATPase subunit beta, found in Homo sapiens (Human).